A 206-amino-acid polypeptide reads, in one-letter code: MPKLRLIGLTLLALSATAVSHAEETRYVSDELNTWVRSGPGDHYRLVGTVNAGEEVTLLQTDANTNYAQVKDSSGRTAWIPLKQLSTEPSLRSRVPDLENQVKTLTDKLTNIDNTWNQRTAEMQQKVAQSDSVINGLKEENQKLKNELIVAQKKVDAASVQLDDKQRTIIMQWFMYGGGVLGLGLLLGLVLPHLIPSRKRKDRWMN.

A signal peptide spans M1–A22. One can recognise an SH3b domain in the interval E23–P89. Residues I169 to L191 form a helical membrane-spanning segment.

It to H.influenzae HI_1605.

The protein resides in the membrane. This is an uncharacterized protein from Escherichia coli O157:H7.